The following is a 226-amino-acid chain: MDELKKLAGVYAAGFVEDGMVVGLGTGSTAYFFVEEIGRRIKEEGLSVVGVTTSSQTTKQAEGLGIPLKSVDDIDSIDVTVDGADEVDPQLNGIKGGGGALLMEKIVATPTKKYIWVVDESKMVDQLGAFKLPVEVVQYGADRLYLDFESKGYKPSFRVTEQGDRFVTDMKNFIIDLDLGKINNPVALGDELKAMTGVVEHGLFNGMVNKVIVAGKDGVKIVEVKD.

Residues 26–29 (TGST), 82–85 (DGAD), and 95–98 (KGGG) each bind substrate. Glu104 functions as the Proton acceptor in the catalytic mechanism. Substrate is bound at residue Lys122.

It belongs to the ribose 5-phosphate isomerase family. Homodimer.

It catalyses the reaction aldehydo-D-ribose 5-phosphate = D-ribulose 5-phosphate. It functions in the pathway carbohydrate degradation; pentose phosphate pathway; D-ribose 5-phosphate from D-ribulose 5-phosphate (non-oxidative stage): step 1/1. Catalyzes the reversible conversion of ribose-5-phosphate to ribulose 5-phosphate. This chain is Ribose-5-phosphate isomerase A, found in Streptococcus thermophilus (strain CNRZ 1066).